Reading from the N-terminus, the 82-residue chain is Small ribosomal subunit protein bS16 (82 aa).

Belongs to the bacterial ribosomal protein bS16 family.

This Deinococcus geothermalis (strain DSM 11300 / CIP 105573 / AG-3a) protein is Small ribosomal subunit protein bS16.